The sequence spans 662 residues: Hypoxia-inducible factor 3-alpha (662 aa).

Residues 1 to 25 (MDWDQDRSSTELRKEKSRDAARSRR) are disordered. The region spanning 12–65 (LRKEKSRDAARSRRSQETEVLYQLAHTLPFARGVSAHLDKASIMRLTISYLRMH) is the bHLH domain. Positions 75–98 (QVRKEGEPLDACYLKALEGFVMVL) are nuclear localization signal. PAS domains are found at residues 80 to 150 (GEPL…PSLS) and 225 to 295 (PHPA…LSKG). Positions 228 to 272 (ASLEPPLGRGAFLSRHSLDMKFTYCDERIAEVAGYSPDDLIGCSA) are nuclear export signal. The tract at residues 352 to 379 (EQTEQHTRRPPQLGTSSKKGIPGNSLDP) is disordered. The LRRLL signature appears at 410–413 (LRRL). Disordered regions lie at residues 417–445 (ILDG…ADLP) and 459–480 (STAR…PDTP). Residues 421-433 (PPTAATPSTPQAA) are compositionally biased toward low complexity. Residues 448–581 (LAVGLENAHR…SEDKGLELLE (134 aa)) are ODD. Positions 450–501 (VGLENAHRLSTARKNKTMETDLDIAQDPDTPDLEMLAPYISMDDDFQLNSSE) are NTAD. Lys-463 participates in a covalent cross-link: Glycyl lysine isopeptide (Lys-Gly) (interchain with G-Cter in ubiquitin). Acidic residues predominate over residues 469–480 (TDLDIAQDPDTP). Positions 485 to 492 (LAPYISMD) match the LAPYISMD motif. Position 487 is a 4-hydroxyproline (Pro-487). Residues 500-595 (SEQLPKVHRR…KRSPRLEPGS (96 aa)) are disordered. The segment covering 505–521 (KVHRRPPRTARRPRARS) has biased composition (basic residues). Lys-565 is covalently cross-linked (Glycyl lysine isopeptide (Lys-Gly) (interchain with G-Cter in ubiquitin)). Residues 572-584 (SEDKGLELLETKP) show a composition bias toward basic and acidic residues.

In terms of assembly, interacts with ARNT, BAD, BCL2L2, EPAS1, HIF1A, MCL1 and VHL. In normoxia, hydroxylated on Pro-487 in the oxygen-dependent degradation domain (ODD) by PHD. The hydroxylated proline promotes interaction with VHL, initiating rapid ubiquitination and subsequent proteasomal degradation. Post-translationally, ubiquitinated; ubiquitination occurs in a VHL- and oxygen-dependent pathway and subsequently targeted for proteasomal degradation. As to expression, expressed in the perivenous zone of the liver. Expressed in all tissues examined during normoxia. Expressed in brain and lung. Expressed in periportal and perivenous hepatocytes and in endothelial cells of the central vein (at protein level). Highest expression seen in the cerebral cortex, hippocampus, and lung. Low expression in myocardial tissue and liver.

Its subcellular location is the nucleus. The protein localises to the cytoplasm. It localises to the nucleus speckle. The protein resides in the mitochondrion. Functionally, acts as a transcriptional regulator in adaptive response to low oxygen tension. Attenuates the ability of transcription factor HIF1A, EPAS1 and the HIF1A-ARNT complex to bind to hypoxia-responsive elements (HRE) located within the enhancer/promoter of hypoxia-inducible target genes and hence inhibits HRE-driven transcriptional activation. Functions as an inhibitor of angiogenesis in hypoxic cells of the cornea. Plays a role in the development of the cardiorespiratory system. May also be involved in apoptosis. May act as a tumor suppressor. This chain is Hypoxia-inducible factor 3-alpha, found in Rattus norvegicus (Rat).